Reading from the N-terminus, the 223-residue chain is 7-cyano-7-deazaguanine synthase (223 aa).

An ATP-binding site is contributed by 15–25 (FSGGQDSTTCL). Zn(2+) is bound by residues Cys191, Cys200, Cys203, and Cys206.

This sequence belongs to the QueC family. As to quaternary structure, homodimer. Requires Zn(2+) as cofactor.

It carries out the reaction 7-carboxy-7-deazaguanine + NH4(+) + ATP = 7-cyano-7-deazaguanine + ADP + phosphate + H2O + H(+). It functions in the pathway purine metabolism; 7-cyano-7-deazaguanine biosynthesis. Catalyzes the ATP-dependent conversion of 7-carboxy-7-deazaguanine (CDG) to 7-cyano-7-deazaguanine (preQ(0)). This is 7-cyano-7-deazaguanine synthase from Staphylococcus haemolyticus (strain JCSC1435).